Reading from the N-terminus, the 163-residue chain is Ribosome maturation factor RimP (163 aa).

It belongs to the RimP family.

The protein localises to the cytoplasm. Its function is as follows. Required for maturation of 30S ribosomal subunits. The polypeptide is Ribosome maturation factor RimP (Streptococcus mutans serotype c (strain ATCC 700610 / UA159)).